A 178-amino-acid polypeptide reads, in one-letter code: Stage V sporulation protein T (178 aa).

The SpoVT-AbrB domain maps to 5–51; it reads GIVRRIDDLGRVVIPKEIRRTLRIREGDPLEIFVDRDGEVILKKYSP. The interval 56 to 178 is GAF-like; that stretch reads GDFAKEYADA…AGFLARQMEQ (123 aa).

This sequence to B.subtilis AbrB and Abh. As to quaternary structure, homotetramer. Two monomers dimerize via their N-terminal swapped-hairpin domains. These dimers further associate into tetramers through helical interactions between their C-terminal GAF-like domains.

Its function is as follows. Transcriptional factor that positively regulates or negatively the expression of a large number of forespore-specific sigma G-dependent genes. May provide a mechanism of feedback control that is important for forespore development. SpoVT levels during spore formation have a major impact on the germination and the resistance of the resultant spores. The polypeptide is Stage V sporulation protein T (Bacillus subtilis (strain 168)).